The primary structure comprises 260 residues: 3'-5' ssDNA/RNA exonuclease TatD (260 aa).

A divalent metal cation contacts are provided by Glu-92, His-128, and His-153.

This sequence belongs to the metallo-dependent hydrolases superfamily. TatD-type hydrolase family. TatD subfamily. Monomer. The cofactor is Mg(2+).

Its subcellular location is the cytoplasm. Its function is as follows. 3'-5' exonuclease that prefers single-stranded DNA and RNA. May play a role in the H(2)O(2)-induced DNA damage repair. The protein is 3'-5' ssDNA/RNA exonuclease TatD of Pantoea sp. (strain At-9b).